Consider the following 462-residue polypeptide: Toxin CqTX-A (462 aa).

Positions 1–19 are cleaved as a signal peptide; the sequence is MANMLYFSLLALLFMTGIA. The N-linked (GlcNAc...) asparagine glycan is linked to N174.

This sequence belongs to the jellyfish toxin family. Type I subfamily. In terms of processing, contains disulfide bonds. Post-translationally, N-glycosylated.

The protein localises to the secreted. Its subcellular location is the nematocyst. The protein resides in the target cell membrane. Functionally, critical allergen and main toxic protein of C.quadrigatus venom. Has potent hemolytic activity. Is lethal to crayfish. Causes cutaneous inflammation in humans. May act as a pore-forming toxin, disrupting normal transmembrane ion concentration gradients in susceptible cells. This chain is Toxin CqTX-A, found in Chiropsoides quadrigatus (Box jellyfish).